The sequence spans 1182 residues: Myosin IC heavy chain (1182 aa).

The region spanning Glu-15–Glu-698 is the Myosin motor domain. Gly-109–Thr-116 lines the ATP pocket. Residues Ala-571–Asp-593 are actin-binding. A TH1 domain is found at Arg-774 to Ala-957. 2 disordered regions span residues Lys-999 to Gly-1052 and Ser-1064 to Gln-1103. A compositionally biased stretch (low complexity) spans Lys-1013 to Pro-1042. Positions Pro-1081–Ala-1092 are enriched in pro residues. The region spanning Pro-1123–Ile-1182 is the SH3 domain.

It belongs to the TRAFAC class myosin-kinesin ATPase superfamily. Myosin family. In terms of assembly, myosin I heavy chain is single-headed. Dimer of a heavy and a light chain. Inability to self-assemble into filaments.

Its subcellular location is the cell projection. The protein localises to the lamellipodium. Its function is as follows. Myosin is a protein that binds to actin and has ATPase activity that is activated by actin. Involved in the process of phagocytosis and appears to support streaming behavior. This is Myosin IC heavy chain (myoC) from Dictyostelium discoideum (Social amoeba).